The following is a 229-amino-acid chain: Translation initiation factor 6 (229 aa).

The protein belongs to the eIF-6 family.

Functionally, binds to the 50S ribosomal subunit and prevents its association with the 30S ribosomal subunit to form the 70S initiation complex. The chain is Translation initiation factor 6 from Thermococcus kodakarensis (strain ATCC BAA-918 / JCM 12380 / KOD1) (Pyrococcus kodakaraensis (strain KOD1)).